The chain runs to 307 residues: Mitochondrial 2-oxodicarboxylate carrier 2 (307 aa).

6 helical membrane-spanning segments follow: residues 10–30 (LPFI…LTVM), 76–95 (SRLY…KRAT), 122–142 (IAAG…FELI), 171–191 (GLYK…GGYF), 215–235 (LIAG…FDVV), and 280–300 (CRLA…MNFF). Solcar repeat units follow at residues 10-106 (LPFI…YQKI), 116-200 (TTQK…VRNS), and 209-299 (QKTR…MMNF).

The protein belongs to the mitochondrial carrier (TC 2.A.29) family.

It is found in the mitochondrion inner membrane. In terms of biological role, transports C5-C7 oxodicarboxylates across the inner membranes of mitochondria. Can transport 2-oxoadipate, 2-oxoglutarate, adipate, glutarate, 2-oxopimelate, oxaloacetate, citrate and malate. The main physiological role is probably to supply 2-oxoadipate and 2-oxoglutarate from the mitochondrial matrix to the cytosol where they are used in the biosynthesis of lysine and glutamate, respectively, and in lysine catabolism. This Saccharomyces cerevisiae (strain ATCC 204508 / S288c) (Baker's yeast) protein is Mitochondrial 2-oxodicarboxylate carrier 2 (ODC2).